The following is a 196-amino-acid chain: Small ribosomal subunit protein uS4c (196 aa).

One can recognise an S4 RNA-binding domain in the interval M89–P157.

This sequence belongs to the universal ribosomal protein uS4 family. In terms of assembly, part of the 30S ribosomal subunit. Contacts protein S5. The interaction surface between S4 and S5 is involved in control of translational fidelity.

It is found in the plastid. The protein resides in the chloroplast. Functionally, one of the primary rRNA binding proteins, it binds directly to 16S rRNA where it nucleates assembly of the body of the 30S subunit. In terms of biological role, with S5 and S12 plays an important role in translational accuracy. In Elymus canadensis (Canada wild rye), this protein is Small ribosomal subunit protein uS4c (rps4).